The following is a 475-amino-acid chain: Threonine synthase (475 aa).

Lys-120 is subject to N6-(pyridoxal phosphate)lysine.

It belongs to the threonine synthase family. Pyridoxal 5'-phosphate is required as a cofactor.

It catalyses the reaction O-phospho-L-homoserine + H2O = L-threonine + phosphate. It functions in the pathway amino-acid biosynthesis; L-threonine biosynthesis; L-threonine from L-aspartate: step 5/5. Functionally, catalyzes the gamma-elimination of phosphate from L-phosphohomoserine and the beta-addition of water to produce L-threonine. The protein is Threonine synthase (thrC) of Methylobacillus glycogenes.